A 424-amino-acid polypeptide reads, in one-letter code: Arginine biosynthesis bifunctional protein ArgJ (424 aa).

The substrate site is built by T166, K192, T203, E290, N419, and T424. T203 serves as the catalytic Nucleophile.

Belongs to the ArgJ family. Heterotetramer of two alpha and two beta chains.

The protein resides in the cytoplasm. It catalyses the reaction N(2)-acetyl-L-ornithine + L-glutamate = N-acetyl-L-glutamate + L-ornithine. It carries out the reaction L-glutamate + acetyl-CoA = N-acetyl-L-glutamate + CoA + H(+). It functions in the pathway amino-acid biosynthesis; L-arginine biosynthesis; L-ornithine and N-acetyl-L-glutamate from L-glutamate and N(2)-acetyl-L-ornithine (cyclic): step 1/1. The protein operates within amino-acid biosynthesis; L-arginine biosynthesis; N(2)-acetyl-L-ornithine from L-glutamate: step 1/4. Functionally, catalyzes two activities which are involved in the cyclic version of arginine biosynthesis: the synthesis of N-acetylglutamate from glutamate and acetyl-CoA as the acetyl donor, and of ornithine by transacetylation between N(2)-acetylornithine and glutamate. The polypeptide is Arginine biosynthesis bifunctional protein ArgJ (Colwellia psychrerythraea (strain 34H / ATCC BAA-681) (Vibrio psychroerythus)).